A 257-amino-acid polypeptide reads, in one-letter code: Thiazole synthase (257 aa).

The active-site Schiff-base intermediate with DXP is the lysine 96. 1-deoxy-D-xylulose 5-phosphate is bound by residues glycine 157, 184 to 185 (AG), and 206 to 207 (NT).

It belongs to the ThiG family. Homotetramer. Forms heterodimers with either ThiH or ThiS.

The protein resides in the cytoplasm. It carries out the reaction [ThiS sulfur-carrier protein]-C-terminal-Gly-aminoethanethioate + 2-iminoacetate + 1-deoxy-D-xylulose 5-phosphate = [ThiS sulfur-carrier protein]-C-terminal Gly-Gly + 2-[(2R,5Z)-2-carboxy-4-methylthiazol-5(2H)-ylidene]ethyl phosphate + 2 H2O + H(+). It participates in cofactor biosynthesis; thiamine diphosphate biosynthesis. Catalyzes the rearrangement of 1-deoxy-D-xylulose 5-phosphate (DXP) to produce the thiazole phosphate moiety of thiamine. Sulfur is provided by the thiocarboxylate moiety of the carrier protein ThiS. In vitro, sulfur can be provided by H(2)S. This chain is Thiazole synthase, found in Allorhizobium ampelinum (strain ATCC BAA-846 / DSM 112012 / S4) (Agrobacterium vitis (strain S4)).